The sequence spans 226 residues: Protein DEHYDRATION-INDUCED 19 (226 aa).

Residues 158-208 (FPTSDTEETSKPPISIPDDASVIKETPAQPWDSSIDSSLTREEREQKRKQA) form a disordered region. The segment covering 196–205 (LTREEREQKR) has biased composition (basic and acidic residues).

It belongs to the Di19 family.

In Oryza sativa subsp. japonica (Rice), this protein is Protein DEHYDRATION-INDUCED 19 (DI19-1).